A 442-amino-acid chain; its full sequence is Large ribosomal subunit protein mL65 (442 aa).

This sequence belongs to the mitochondrion-specific ribosomal protein mL65 family. Component of the mitochondrial ribosome small subunit (28S) which comprises a 12S rRNA and about 30 distinct proteins.

It is found in the mitochondrion. The sequence is that of Large ribosomal subunit protein mL65 (Mrps30) from Mus musculus (Mouse).